We begin with the raw amino-acid sequence, 574 residues long: MPDPAARRFSLPPFPLAALALSVALLGAPASLAQTAAPAPAPAQTPAAASRAAAPRVSWTKPLKVSSPVSIGPRGELTYVGNDSRVHRTDASGKELWSFALGDIGRAQPVLTPDGGVITAAYDDTVYALSPAGQLTWKAKLDGDVFASPALRPDGSVVVATAGGTVYALSSSGQTLWSYKVGAPVFSSPAVAADGTIYFGAQNGRLHALSPEGRLTWTYAARSSVFSSPALDAEGNLYFGSGDRSIYSLSPAGTLRWVQPTGLFVNASPIVTRAGLVVVGSYDGQLYALNTNGQVAWTYAAGAAIAAPAAELSDGSVVVGDLNGTLHAVTPTGQALWTLPGGAKIDTGAAVSDQGTLYFAVDGGNLNAVENLRPLATGPWPTFRASPLGWGRSATAAELTAQTQARQAAAAASTSQQPRLPTLAQAPAPTPAPAQTTPRPQPTPAQPATPAAPVPPVASPAPATARLTPQVIGGVIYLPLSPIAAGLGYQVQAGSPTRALLVAGSQRLTVPVRAVGGQSLIALRFVTGLPGVSVERQAGTLTLRREGLSAALPLDLAQLLPWAPQPEFPGVVRR.

Residues 1-33 (MPDPAARRFSLPPFPLAALALSVALLGAPASLA) form the signal peptide. The segment covering 400-438 (TAQTQARQAAAAASTSQQPRLPTLAQAPAPTPAPAQTTP) has biased composition (low complexity). Residues 400–461 (TAQTQARQAA…APVPPVASPA (62 aa)) form a disordered region. Over residues 439–459 (RPQPTPAQPATPAAPVPPVAS) the composition is skewed to pro residues.

Functionally, plays an important role in resistance to desiccation and radiation, maybe by protecting genome integrity under extreme conditions. This Deinococcus radiodurans (strain ATCC 13939 / DSM 20539 / JCM 16871 / CCUG 27074 / LMG 4051 / NBRC 15346 / NCIMB 9279 / VKM B-1422 / R1) protein is Desiccation/radiation resistance protein DR_1769.